The following is a 187-amino-acid chain: UPF0215 protein PAE0952 (187 aa).

The protein belongs to the UPF0215 family.

The sequence is that of UPF0215 protein PAE0952 from Pyrobaculum aerophilum (strain ATCC 51768 / DSM 7523 / JCM 9630 / CIP 104966 / NBRC 100827 / IM2).